We begin with the raw amino-acid sequence, 414 residues long: Nucleoporin NUP42 (414 aa).

A C3H1-type zinc finger spans residues 1–25 (MPVCNFFLQGRCRYGDTCWNEHPTG). Disordered stretches follow at residues 24–73 (TGGR…RGAA) and 200–221 (PPASAPGFGSPGPGFGSATSGF). FG repeat units follow at residues 43–44 (FG), 207–208 (FG), 214–215 (FG), 221–222 (FG), 233–234 (FG), 238–239 (FG), 257–258 (FG), 268–269 (FG), 280–281 (FG), 306–307 (FG), 325–326 (FG), 329–330 (FG), 335–336 (FG), 341–342 (FG), 347–348 (FG), 351–352 (FG), and 362–363 (FG).

In terms of assembly, probable component of the nuclear pore complex (NPC).

It localises to the nucleus. The protein resides in the nuclear pore complex. Its subcellular location is the nucleus membrane. Its function is as follows. Required for the export of mRNAs containing poly(A) tails from the nucleus into the cytoplasm. The protein is Nucleoporin NUP42 (nup42) of Danio rerio (Zebrafish).